The primary structure comprises 191 residues: Molybdenum cofactor guanylyltransferase (191 aa).

GTP contacts are provided by residues 13–15 (LAG), Lys-26, Asp-72, and Asp-102. Asp-102 lines the Mg(2+) pocket.

It belongs to the MobA family. As to quaternary structure, monomer. Requires Mg(2+) as cofactor.

The protein resides in the cytoplasm. It catalyses the reaction Mo-molybdopterin + GTP + H(+) = Mo-molybdopterin guanine dinucleotide + diphosphate. Its function is as follows. Transfers a GMP moiety from GTP to Mo-molybdopterin (Mo-MPT) cofactor (Moco or molybdenum cofactor) to form Mo-molybdopterin guanine dinucleotide (Mo-MGD) cofactor. This is Molybdenum cofactor guanylyltransferase from Pseudomonas putida (strain ATCC 700007 / DSM 6899 / JCM 31910 / BCRC 17059 / LMG 24140 / F1).